Reading from the N-terminus, the 117-residue chain is Large ribosomal subunit protein bL20c (117 aa).

It belongs to the bacterial ribosomal protein bL20 family.

It localises to the plastid. In terms of biological role, binds directly to 23S ribosomal RNA and is necessary for the in vitro assembly process of the 50S ribosomal subunit. It is not involved in the protein synthesizing functions of that subunit. This is Large ribosomal subunit protein bL20c (rpl20) from Euglena longa (Euglenophycean alga).